Consider the following 200-residue polypeptide: Holliday junction branch migration complex subunit RuvA (200 aa).

Residues 1–64 (MIGHLRGIIV…EDAHTLYGFH (64 aa)) are domain I. The tract at residues 65 to 143 (NDHERRLFRA…RWHTNDTPSP (79 aa)) is domain II. The interval 133 to 152 (SRWHTNDTPSPEGLRSSNTQ) is disordered. A flexible linker region spans residues 144-148 (EGLRS). The domain III stretch occupies residues 149-200 (SNTQPTQDAISALMALGYKPQEAKRAIDAIQKPDLSAETLIRLALKQMVLGT).

It belongs to the RuvA family. As to quaternary structure, homotetramer. Forms an RuvA(8)-RuvB(12)-Holliday junction (HJ) complex. HJ DNA is sandwiched between 2 RuvA tetramers; dsDNA enters through RuvA and exits via RuvB. An RuvB hexamer assembles on each DNA strand where it exits the tetramer. Each RuvB hexamer is contacted by two RuvA subunits (via domain III) on 2 adjacent RuvB subunits; this complex drives branch migration. In the full resolvosome a probable DNA-RuvA(4)-RuvB(12)-RuvC(2) complex forms which resolves the HJ.

It localises to the cytoplasm. The RuvA-RuvB-RuvC complex processes Holliday junction (HJ) DNA during genetic recombination and DNA repair, while the RuvA-RuvB complex plays an important role in the rescue of blocked DNA replication forks via replication fork reversal (RFR). RuvA specifically binds to HJ cruciform DNA, conferring on it an open structure. The RuvB hexamer acts as an ATP-dependent pump, pulling dsDNA into and through the RuvAB complex. HJ branch migration allows RuvC to scan DNA until it finds its consensus sequence, where it cleaves and resolves the cruciform DNA. This Coxiella burnetii (strain CbuK_Q154) (Coxiella burnetii (strain Q154)) protein is Holliday junction branch migration complex subunit RuvA.